A 432-amino-acid chain; its full sequence is Enolase (432 aa).

A (2R)-2-phosphoglycerate-binding site is contributed by glutamine 167. Catalysis depends on glutamate 209, which acts as the Proton donor. 3 residues coordinate Mg(2+): aspartate 246, glutamate 290, and aspartate 317. The (2R)-2-phosphoglycerate site is built by lysine 342, arginine 371, serine 372, and lysine 393. The active-site Proton acceptor is lysine 342.

Belongs to the enolase family. Component of the RNA degradosome, a multiprotein complex involved in RNA processing and mRNA degradation. Requires Mg(2+) as cofactor.

It is found in the cytoplasm. It localises to the secreted. The protein resides in the cell surface. It carries out the reaction (2R)-2-phosphoglycerate = phosphoenolpyruvate + H2O. It participates in carbohydrate degradation; glycolysis; pyruvate from D-glyceraldehyde 3-phosphate: step 4/5. Its function is as follows. Catalyzes the reversible conversion of 2-phosphoglycerate (2-PG) into phosphoenolpyruvate (PEP). It is essential for the degradation of carbohydrates via glycolysis. This is Enolase from Klebsiella pneumoniae (strain 342).